Consider the following 89-residue polypeptide: Defensin-like protein 197 (89 aa).

Residues 1-26 (MKFVSVFLVLFIFFLVVLEAPEKIEA) form the signal peptide. 4 disulfide bridges follow: Cys33/Cys86, Cys46/Cys70, Cys55/Cys81, and Cys59/Cys83.

Belongs to the DEFL family. Protease inhibitor I18 (RTI/MTI-2) subfamily.

It is found in the secreted. The protein is Defensin-like protein 197 (ATTI6) of Arabidopsis thaliana (Mouse-ear cress).